Reading from the N-terminus, the 371-residue chain is Mannose-1-phosphate guanylyltransferase catalytic subunit beta (371 aa).

Positions 14 to 233 (RALILVGGYG…TGFWMDIGQP (220 aa)) are substrate-binding domain. GDP-alpha-D-mannose is bound at residue Asp-122. Asp-122 is a Mg(2+) binding site. Lys-173 is an active-site residue. Asp-229 contacts GDP-alpha-D-mannose. Asp-229 contributes to the Mg(2+) binding site. Positions 256–371 (YTGPGVVGNV…ASVPEPQIIM (116 aa)) are hexapeptide repeat domain.

It belongs to the transferase hexapeptide repeat family. As to quaternary structure, component of the GMPPA-GMPPB mannose-1-phosphate guanylyltransferase complex composed of 4 Gmppa subunits and 8 Gmppb subunits; the complex is organized into three layers, a central layer made up of 2 Gmppa dimers sandwiched between two layers each made up of 2 Gmppb dimers. Gmppb catalytic activity is reduced when part of the complex and binding of GDP-alpha-D-Mannose by Gmppa induces allosteric feedback inhibition of Gmppb. It depends on Mg(2+) as a cofactor.

It catalyses the reaction alpha-D-mannose 1-phosphate + GTP + H(+) = GDP-alpha-D-mannose + diphosphate. It functions in the pathway nucleotide-sugar biosynthesis; GDP-alpha-D-mannose biosynthesis; GDP-alpha-D-mannose from alpha-D-mannose 1-phosphate (GTP route): step 1/1. With respect to regulation, enzyme activity is reduced by incorporation into the GMPPA-GMPPB mannose-1-phosphate guanylyltransferase complex. Allosterically inhibited, when part of the GMPPA-GMPPB complex, by GDP-alpha-D-mannose binding to Gmppa. Its function is as follows. Catalytic subunit of the GMPPA-GMPPB mannose-1-phosphate guanylyltransferase complex. Catalyzes the formation of GDP-mannose, an essential precursor of glycan moieties of glycoproteins and glycolipids. Can catalyze the reverse reaction in vitro. Together with GMPPA regulates GDP-alpha-D-mannose levels. This is Mannose-1-phosphate guanylyltransferase catalytic subunit beta from Drosophila pseudoobscura pseudoobscura (Fruit fly).